A 389-amino-acid chain; its full sequence is Formate-dependent phosphoribosylglycinamide formyltransferase (389 aa).

Residues 21-22 (EL) and Glu-81 each bind N(1)-(5-phospho-beta-D-ribosyl)glycinamide. ATP is bound by residues Arg-113, Lys-154, 159–164 (SSGKGQ), 194–197 (EEFI), and Glu-202. The 190-residue stretch at 118–307 (RLAAEKLGLK…EFEIHVRAIL (190 aa)) folds into the ATP-grasp domain. Mg(2+) contacts are provided by Glu-266 and Glu-278. N(1)-(5-phospho-beta-D-ribosyl)glycinamide-binding positions include Asp-285, Lys-353, and 360–361 (RR).

This sequence belongs to the PurK/PurT family. Homodimer.

The catalysed reaction is N(1)-(5-phospho-beta-D-ribosyl)glycinamide + formate + ATP = N(2)-formyl-N(1)-(5-phospho-beta-D-ribosyl)glycinamide + ADP + phosphate + H(+). The protein operates within purine metabolism; IMP biosynthesis via de novo pathway; N(2)-formyl-N(1)-(5-phospho-D-ribosyl)glycinamide from N(1)-(5-phospho-D-ribosyl)glycinamide (formate route): step 1/1. Its function is as follows. Involved in the de novo purine biosynthesis. Catalyzes the transfer of formate to 5-phospho-ribosyl-glycinamide (GAR), producing 5-phospho-ribosyl-N-formylglycinamide (FGAR). Formate is provided by PurU via hydrolysis of 10-formyl-tetrahydrofolate. This Methanocaldococcus jannaschii (strain ATCC 43067 / DSM 2661 / JAL-1 / JCM 10045 / NBRC 100440) (Methanococcus jannaschii) protein is Formate-dependent phosphoribosylglycinamide formyltransferase.